The chain runs to 205 residues: MAGSLYIISAPSGAGKTSLVSKLTEKDSRIQVSISSTTRPKRPGEEDGVNYVFLSVDAFKQKVAENDFLEHAQVFDNYYGTSKSVVESKLAEDKDVILEIDWQGAQQVRKLIPDAVSVFILPPSLKELEKRLRGRGTDSEDVIERRMSDAVNEMKHFNEFDYLVINNHFDTALSELHSIFLANRQACAKQYEKHSVMINELTQQH.

The Guanylate kinase-like domain maps to 3–181 (GSLYIISAPS…ALSELHSIFL (179 aa)). 10–17 (APSGAGKT) is a binding site for ATP.

The protein belongs to the guanylate kinase family.

It is found in the cytoplasm. The catalysed reaction is GMP + ATP = GDP + ADP. Essential for recycling GMP and indirectly, cGMP. The sequence is that of Guanylate kinase from Hydrogenovibrio crunogenus (strain DSM 25203 / XCL-2) (Thiomicrospira crunogena).